Consider the following 564-residue polypeptide: E3 ubiquitin-protein ligase TRIM16 (564 aa).

The disordered stretch occupies residues 1 to 70 (MAELDLMAPG…DPAEQGDPAG (70 aa)). Over residues 24-39 (SPDSGSPSPDSGSASP) the composition is skewed to low complexity. 2 B box-type zinc fingers span residues 72-122 (GKEV…LTEP) and 126-165 (HNWR…IVSL). At Ser-116 the chain carries Phosphoserine. Zn(2+) contacts are provided by Cys-131, His-134, Cys-153, and His-157. 3 coiled-coil regions span residues 165–203 (LDAA…NQKS), 243–274 (AALS…RMAA), and 320–340 (HLIQ…KEEE). Position 203 is a phosphoserine (Ser-203). Residues 355-553 (YWTSKPEPST…RIVDLGEEPE (199 aa)) form the B30.2/SPRY domain.

Belongs to the TRIM/RBCC family. In terms of assembly, homodimerizes via its coiled-coil domain. Heterodimerizes with MID1, TRIM24 and PML. Interacts with Galectin-3/LGALS3 in a ULK1-dependent manner; this interaction mediates autophagy of damage endomembranes. Interacts with BECN1. Interacts with ATG16L1. Interacts with p62/SQSTM and LC3B/MAP1LC3B. In terms of processing, phosphorylated by ULK1. Auto-ubiquitinates via its B-Boxes.

It localises to the cytoplasm. The enzyme catalyses S-ubiquitinyl-[E2 ubiquitin-conjugating enzyme]-L-cysteine + [acceptor protein]-L-lysine = [E2 ubiquitin-conjugating enzyme]-L-cysteine + N(6)-ubiquitinyl-[acceptor protein]-L-lysine.. Functionally, E3 ubiquitin ligase that plays an essential role in the organization of autophagic response and ubiquitination upon lysosomal and phagosomal damages. Plays a role in the stress-induced biogenesis and degradation of protein aggresomes by regulating the p62-KEAP1-NRF2 signaling and particularly by modulating the ubiquitination levels and thus stability of NRF2. Acts as a scaffold protein and facilitates autophagic degradation of protein aggregates by interacting with p62/SQSTM, ATG16L1 and LC3B/MAP1LC3B. In turn, protects the cell against oxidative stress-induced cell death as a consequence of endomembrane damage. The protein is E3 ubiquitin-protein ligase TRIM16 (TRIM16) of Pongo abelii (Sumatran orangutan).